The sequence spans 297 residues: Glycine--tRNA ligase alpha subunit (297 aa).

It belongs to the class-II aminoacyl-tRNA synthetase family. In terms of assembly, tetramer of two alpha and two beta subunits.

It localises to the cytoplasm. The catalysed reaction is tRNA(Gly) + glycine + ATP = glycyl-tRNA(Gly) + AMP + diphosphate. The sequence is that of Glycine--tRNA ligase alpha subunit from Sulfurihydrogenibium sp. (strain YO3AOP1).